We begin with the raw amino-acid sequence, 268 residues long: Phosphatidylglycerol--prolipoprotein diacylglyceryl transferase (268 aa).

The next 4 helical transmembrane spans lie at 14–34 (LGPI…FAGW), 57–77 (LTFY…IIFY), 90–110 (FFLW…LIAF), and 117–137 (IGAN…IGLG). Position 140 (Arg-140) interacts with a 1,2-diacyl-sn-glycero-3-phospho-(1'-sn-glycerol). The next 3 helical transmembrane spans lie at 174-194 (QLFE…LVTI), 200-220 (YLVL…CEFF), and 238-258 (GQIL…AVFI).

This sequence belongs to the Lgt family.

The protein localises to the cell inner membrane. The enzyme catalyses L-cysteinyl-[prolipoprotein] + a 1,2-diacyl-sn-glycero-3-phospho-(1'-sn-glycerol) = an S-1,2-diacyl-sn-glyceryl-L-cysteinyl-[prolipoprotein] + sn-glycerol 1-phosphate + H(+). The protein operates within protein modification; lipoprotein biosynthesis (diacylglyceryl transfer). Its function is as follows. Catalyzes the transfer of the diacylglyceryl group from phosphatidylglycerol to the sulfhydryl group of the N-terminal cysteine of a prolipoprotein, the first step in the formation of mature lipoproteins. In Francisella tularensis subsp. novicida (strain U112), this protein is Phosphatidylglycerol--prolipoprotein diacylglyceryl transferase.